The sequence spans 43 residues: METATVFSIFISCLLLSLTGYSLYTAFGEPSAELRDPFEEHED.

The chain crosses the membrane as a helical span at residues 5 to 27; the sequence is TVFSIFISCLLLSLTGYSLYTAF.

The protein belongs to the PsbN family.

It is found in the plastid. Its subcellular location is the chloroplast thylakoid membrane. Functionally, may play a role in photosystem I and II biogenesis. The polypeptide is Protein PsbN (Chlorokybus atmophyticus (Soil alga)).